Reading from the N-terminus, the 112-residue chain is Cortistatin (112 aa).

Residues 1-27 form the signal peptide; the sequence is MGGCSTRGKRPSALSLLLLLLLSGIAA. Positions 28-81 are excised as a propeptide; sequence SALPLESGPTGQDSVQDATGGRRTGLLTFLAWWHEWASQDSSSTAFEGGTPELS. A disordered region spans residues 66-101; that stretch reads QDSSSTAFEGGTPELSKRQERPPLQQPPHRDKKPCK. An intrachain disulfide couples C100 to C111.

It belongs to the somatostatin family. Interneurons in the cerebral cortex and hippocampus.

The protein resides in the secreted. Functionally, neuropeptide with neuronal depressant and sleep-modulating properties. The chain is Cortistatin (Cort) from Rattus norvegicus (Rat).